Reading from the N-terminus, the 812-residue chain is INO80 complex subunit D (812 aa).

Disordered stretches follow at residues 521–573 and 581–600; these read NSRK…LCMP and EVSSIRSPSTPNLSTEELPD. Over residues 524–558 the composition is skewed to basic residues; the sequence is KVQHHQQRKPRKKTKPPALTKKTKKKRRRGPRRPQ. Over residues 585-595 the composition is skewed to polar residues; that stretch reads IRSPSTPNLST.

It belongs to the INO80D family. In terms of assembly, component of the chromatin-remodeling INO80 complex.

Its subcellular location is the nucleus. In terms of biological role, putative regulatory component of the chromatin remodeling INO80 complex which is involved in transcriptional regulation, DNA replication and probably DNA repair. The protein is INO80 complex subunit D of Xenopus laevis (African clawed frog).